The following is a 595-amino-acid chain: L-allo-isoleucine:holo-[CmaA peptidyl-carrier protein] ligase (595 aa).

Residues 507–582 (VVSPQAGSAV…EWVQYYATHA (76 aa)) enclose the Carrier domain. At serine 542 the chain carries O-(pantetheine 4'-phosphoryl)serine.

Belongs to the ATP-dependent AMP-binding enzyme family. As to quaternary structure, homodimer. The cofactor is pantetheine 4'-phosphate.

The enzyme catalyses L-alloisoleucine + holo-[CmaA peptidyl-carrier protein] + ATP = L-alloisoleucyl-[CmaA peptidyl-carrier protein] + AMP + diphosphate. Its function is as follows. Involved in the biosynthesis of the phytotoxin coronatine (COR) which mimics the plant hormone jasmonic acid isoleucine and promotes opening of stomata for bacterial entry, bacterial growth in the apoplast, systemic susceptibility, and disease symptoms. CmaA catalyzes the adenylation of L-allo-isoleucine (via the A domain) and the attachment of L-allo-isoleucine to the 4'-phosphopantetheine arm located within the T domain of CmaA. It can also use L-isoleucine, L-leucine and L-valine as substrates. This chain is L-allo-isoleucine:holo-[CmaA peptidyl-carrier protein] ligase, found in Pseudomonas savastanoi pv. glycinea (Pseudomonas syringae pv. glycinea).